A 156-amino-acid polypeptide reads, in one-letter code: Small ribosomal subunit protein uS7 (156 aa).

It belongs to the universal ribosomal protein uS7 family. Part of the 30S ribosomal subunit. Contacts proteins S9 and S11.

Functionally, one of the primary rRNA binding proteins, it binds directly to 16S rRNA where it nucleates assembly of the head domain of the 30S subunit. Is located at the subunit interface close to the decoding center, probably blocks exit of the E-site tRNA. This is Small ribosomal subunit protein uS7 from Methylorubrum extorquens (strain CM4 / NCIMB 13688) (Methylobacterium extorquens).